A 280-amino-acid polypeptide reads, in one-letter code: Orotidine 5'-phosphate decarboxylase (280 aa).

Lys97 functions as the Proton donor in the catalytic mechanism.

It belongs to the OMP decarboxylase family. Type 2 subfamily.

It catalyses the reaction orotidine 5'-phosphate + H(+) = UMP + CO2. Its pathway is pyrimidine metabolism; UMP biosynthesis via de novo pathway; UMP from orotate: step 2/2. This is Orotidine 5'-phosphate decarboxylase (pyrF) from Corynebacterium efficiens (strain DSM 44549 / YS-314 / AJ 12310 / JCM 11189 / NBRC 100395).